The following is a 375-amino-acid chain: Non-structural protein NS5 (375 aa).

The chain is Non-structural protein NS5 (NS-5) from Rottboellia (Sorghum).